The primary structure comprises 336 residues: uncharacterized protein (336 aa).

Residues 297 to 316 (KKDLQKSEEEEHPNDDHVYM) show a composition bias toward basic and acidic residues. A disordered region spans residues 297–336 (KKDLQKSEEEEHPNDDHVYMTEEDDMEKIERGIESLGNGH).

This is an uncharacterized protein from Invertebrate iridescent virus 6 (IIV-6).